Here is a 75-residue protein sequence, read N- to C-terminus: Large ribosomal subunit protein uL29 (75 aa).

This sequence belongs to the universal ribosomal protein uL29 family.

The chain is Large ribosomal subunit protein uL29 from Pyrobaculum aerophilum (strain ATCC 51768 / DSM 7523 / JCM 9630 / CIP 104966 / NBRC 100827 / IM2).